A 79-amino-acid polypeptide reads, in one-letter code: Acyl carrier protein (79 aa).

In terms of domain architecture, Carrier spans 2-77 (SNIEERVKKI…QAIDYINAHA (76 aa)). S37 bears the O-(pantetheine 4'-phosphoryl)serine mark.

It belongs to the acyl carrier protein (ACP) family. In terms of processing, 4'-phosphopantetheine is transferred from CoA to a specific serine of apo-ACP by AcpS. This modification is essential for activity because fatty acids are bound in thioester linkage to the sulfhydryl of the prosthetic group.

It is found in the cytoplasm. The protein operates within lipid metabolism; fatty acid biosynthesis. Carrier of the growing fatty acid chain in fatty acid biosynthesis. In Thioalkalivibrio sulfidiphilus (strain HL-EbGR7), this protein is Acyl carrier protein.